We begin with the raw amino-acid sequence, 389 residues long: Alcohol dehydrogenase-like 5 (389 aa).

8 residues coordinate Zn(2+): Cys54, Thr56, His77, Cys107, Cys110, Cys113, Cys121, and Cys186. Positions 56 and 77 each coordinate an alcohol. Position 56 (Thr56) interacts with NAD(+). NAD(+) is bound by residues 211–216 (GLGAVG), Asp235, Lys240, 305–307 (LGI), Phe332, and Arg382.

The protein belongs to the zinc-containing alcohol dehydrogenase family. Class-III subfamily. In terms of assembly, homodimer. Zn(2+) serves as cofactor.

The protein localises to the cytoplasm. It carries out the reaction a primary alcohol + NAD(+) = an aldehyde + NADH + H(+). The catalysed reaction is a secondary alcohol + NAD(+) = a ketone + NADH + H(+). The sequence is that of Alcohol dehydrogenase-like 5 from Arabidopsis thaliana (Mouse-ear cress).